The following is a 394-amino-acid chain: MAETQGKVITCKAAVVWGPKVPLVIQEICVDPPQKMEVRVKILYSSICHTDLGCWNGTNEAERAFPRILGHEAVGIVESVGEGVKDVKEGDYVIPTFNGECGECKVCKREESNLCERYHVDPMKRVMVNDGGTRFSTTINKDGGSSQSQPIYHFLNTSTFTEYTVLDSACVVKIDPNSPLKQMSLLSCGVSTGVGAAWNIANVKEGKSTAVFGLGSVGLAVAEGARARGASRIIGVDANASKFEKGKLMGVTDFINPKDLTKPVHQMIREITGGGVDYSFECTGNVDVLREAFLSTHVGWGSTVLVGIYPTPRTLPLHPMELFDGRRITGSVFGGFKPKSQLPNFAQQCMKGVVKLEPFITNELPFEKINDAFQLLRDGKSLRCILQISKLLKR.

Zn(2+)-binding residues include C48, T50, H71, C101, C104, C107, C115, and C188. Residues T50 and H71 each coordinate an alcohol. NAD(+) is bound at residue T50. Residues 213 to 218 (GLGSVG), D237, K242, T283, V306, 306 to 308 (VGI), F333, and R383 contribute to the NAD(+) site.

This sequence belongs to the zinc-containing alcohol dehydrogenase family. Class-III subfamily. In terms of assembly, homodimer. Zn(2+) is required as a cofactor.

It localises to the cytoplasm. It catalyses the reaction a primary alcohol + NAD(+) = an aldehyde + NADH + H(+). The catalysed reaction is a secondary alcohol + NAD(+) = a ketone + NADH + H(+). The polypeptide is Alcohol dehydrogenase-like 3 (Arabidopsis thaliana (Mouse-ear cress)).